A 350-amino-acid chain; its full sequence is S-adenosylmethionine:tRNA ribosyltransferase-isomerase (350 aa).

The protein belongs to the QueA family. As to quaternary structure, monomer.

It localises to the cytoplasm. The enzyme catalyses 7-aminomethyl-7-carbaguanosine(34) in tRNA + S-adenosyl-L-methionine = epoxyqueuosine(34) in tRNA + adenine + L-methionine + 2 H(+). It functions in the pathway tRNA modification; tRNA-queuosine biosynthesis. Its function is as follows. Transfers and isomerizes the ribose moiety from AdoMet to the 7-aminomethyl group of 7-deazaguanine (preQ1-tRNA) to give epoxyqueuosine (oQ-tRNA). In Bacillus mycoides (strain KBAB4) (Bacillus weihenstephanensis), this protein is S-adenosylmethionine:tRNA ribosyltransferase-isomerase.